Consider the following 60-residue polypeptide: UPF0434 protein KPK_3615 (60 aa).

Belongs to the UPF0434 family.

This is UPF0434 protein KPK_3615 from Klebsiella pneumoniae (strain 342).